A 90-amino-acid polypeptide reads, in one-letter code: Acylphosphatase (90 aa).

Residues 3 to 90 (AIEVDVFGLV…FETNDFAIRG (88 aa)) form the Acylphosphatase-like domain. Residues Arg18 and Asn36 contribute to the active site.

Belongs to the acylphosphatase family.

The catalysed reaction is an acyl phosphate + H2O = a carboxylate + phosphate + H(+). This is Acylphosphatase (acyP) from Leuconostoc mesenteroides subsp. mesenteroides (strain ATCC 8293 / DSM 20343 / BCRC 11652 / CCM 1803 / JCM 6124 / NCDO 523 / NBRC 100496 / NCIMB 8023 / NCTC 12954 / NRRL B-1118 / 37Y).